The primary structure comprises 404 residues: uncharacterized protein (404 aa).

6 consecutive transmembrane segments (helical) span residues 37–57 (LLILSVIAFFWGLLGVVFVQF), 92–112 (IYNVIFWLSQILINIPLFVLG), 122–142 (LLTLYFVVVSNVFGFAFSYIP), 188–208 (MFYALIWGFLQAVFYSVILII), 230–250 (IGGILFIVNTLSFLIGYTIGT), and 272–292 (AFFLSPNLVFTIFMNIILGIF).

It localises to the cell membrane. This is an uncharacterized protein from Mycoplasma pneumoniae (strain ATCC 29342 / M129 / Subtype 1) (Mycoplasmoides pneumoniae).